A 326-amino-acid polypeptide reads, in one-letter code: tRNA-modifying protein YgfZ (326 aa).

Folate is bound by residues tryptophan 27 and tryptophan 189.

The protein belongs to the tRNA-modifying YgfZ family.

The protein localises to the cytoplasm. Its function is as follows. Folate-binding protein involved in regulating the level of ATP-DnaA and in the modification of some tRNAs. It is probably a key factor in regulatory networks that act via tRNA modification, such as initiation of chromosomal replication. The polypeptide is tRNA-modifying protein YgfZ (Escherichia coli O127:H6 (strain E2348/69 / EPEC)).